Here is a 375-residue protein sequence, read N- to C-terminus: Pectate lyase C (375 aa).

The N-terminal stretch at Met1–Ala22 is a signal peptide. Residues Cys94 and Cys177 are joined by a disulfide bond. Residues Asp151, Asp153, Glu188, and Asp192 each coordinate Ca(2+). Arg240 is an active-site residue. A disulfide bond links Cys351 and Cys374.

This sequence belongs to the polysaccharide lyase 1 family. PLADES subfamily. The cofactor is Ca(2+).

It localises to the secreted. It carries out the reaction Eliminative cleavage of (1-&gt;4)-alpha-D-galacturonan to give oligosaccharides with 4-deoxy-alpha-D-galact-4-enuronosyl groups at their non-reducing ends.. It functions in the pathway glycan metabolism; pectin degradation; 2-dehydro-3-deoxy-D-gluconate from pectin: step 2/5. Involved in maceration and soft-rotting of plant tissue. The sequence is that of Pectate lyase C from Dickeya chrysanthemi (Pectobacterium chrysanthemi).